The chain runs to 83 residues: U20-theraphotoxin-Cg1a 1 (83 aa).

The N-terminal stretch at 1–21 (MKVSVLITLAVLGVMFVWTSA) is a signal peptide. Positions 22–47 (AELEERGSDQPAWLKSLERIFQSEER) are excised as a propeptide. Cystine bridges form between cysteine 49/cysteine 63, cysteine 56/cysteine 68, and cysteine 62/cysteine 76.

It belongs to the neurotoxin 10 (Hwtx-1) family. 40 (Jztx-35) subfamily. As to expression, expressed by the venom gland.

It localises to the secreted. Functionally, probable ion channel inhibitor. The protein is U20-theraphotoxin-Cg1a 1 of Chilobrachys guangxiensis (Chinese earth tiger tarantula).